A 370-amino-acid polypeptide reads, in one-letter code: Spermidine/putrescine import ATP-binding protein PotA (370 aa).

One can recognise an ABC transporter domain in the interval 11 to 241; that stretch reads IELRSITKSY…PKNLFVAKFI (231 aa). 43–50 serves as a coordination point for ATP; it reads GPSGCGKT.

It belongs to the ABC transporter superfamily. Spermidine/putrescine importer (TC 3.A.1.11.1) family. As to quaternary structure, the complex is composed of two ATP-binding proteins (PotA), two transmembrane proteins (PotB and PotC) and a solute-binding protein (PotD).

It localises to the cell inner membrane. It carries out the reaction ATP + H2O + polyamine-[polyamine-binding protein]Side 1 = ADP + phosphate + polyamineSide 2 + [polyamine-binding protein]Side 1.. Functionally, part of the ABC transporter complex PotABCD involved in spermidine/putrescine import. Responsible for energy coupling to the transport system. The protein is Spermidine/putrescine import ATP-binding protein PotA of Pasteurella multocida (strain Pm70).